The chain runs to 561 residues: Urocanate hydratase (561 aa).

Residues 52–53 (GG), Q130, 176–178 (GMG), E196, R201, 242–243 (NA), 263–267 (QTSAH), 273–274 (YL), and Y322 contribute to the NAD(+) site. The active site involves C410. G492 is a binding site for NAD(+).

Belongs to the urocanase family. Requires NAD(+) as cofactor.

The protein localises to the cytoplasm. It catalyses the reaction 4-imidazolone-5-propanoate = trans-urocanate + H2O. It participates in amino-acid degradation; L-histidine degradation into L-glutamate; N-formimidoyl-L-glutamate from L-histidine: step 2/3. Catalyzes the conversion of urocanate to 4-imidazolone-5-propionate. This chain is Urocanate hydratase, found in Citrobacter koseri (strain ATCC BAA-895 / CDC 4225-83 / SGSC4696).